Consider the following 346-residue polypeptide: Farnesyl diphosphate synthase 1 (346 aa).

Isopentenyl diphosphate contacts are provided by Lys-52, Arg-55, and Gln-90. Mg(2+)-binding residues include Asp-97 and Asp-101. Positions 97–101 match the DDXXD motif motif; it reads DDIMD. Arg-106 is a dimethylallyl diphosphate binding site. Arg-107 lines the isopentenyl diphosphate pocket. The dimethylallyl diphosphate site is built by Lys-194, Thr-195, and Gln-233. Residues 236 to 240 carry the DDXXD motif motif; sequence DDYLD. Residues Lys-250 and Lys-259 each contribute to the dimethylallyl diphosphate site.

It belongs to the FPP/GGPP synthase family. Mg(2+) serves as cofactor. Requires Mn(2+) as cofactor. In terms of tissue distribution, highly expressed in shoots.

The enzyme catalyses isopentenyl diphosphate + (2E)-geranyl diphosphate = (2E,6E)-farnesyl diphosphate + diphosphate. The catalysed reaction is isopentenyl diphosphate + dimethylallyl diphosphate = (2E)-geranyl diphosphate + diphosphate. The protein operates within isoprenoid biosynthesis; farnesyl diphosphate biosynthesis; farnesyl diphosphate from geranyl diphosphate and isopentenyl diphosphate: step 1/1. It participates in isoprenoid biosynthesis; geranyl diphosphate biosynthesis; geranyl diphosphate from dimethylallyl diphosphate and isopentenyl diphosphate: step 1/1. Functionally, catalyzes the sequential condensation of isopentenyl pyrophosphate (IPP) with the allylic pyrophosphates, dimethylallyl pyrophosphate (DMAPP), and then with the resultant geranylpyrophosphate (GPP) to the ultimate product farnesyl pyrophosphate (FPP). Has a 4.5 time greater affinity for GPP versus DMAPP. The polypeptide is Farnesyl diphosphate synthase 1 (FDS-1) (Artemisia spiciformis (Spiked big sagebrush)).